The sequence spans 359 residues: MILNSSTEDSIKRIQDDCPKAGRHNYIFVMIPTLYSIIFVVGIFGNSLVVIVIYFYMKLKTVASVFLLNLALADLCFLLTLPLWAVYTAMEYRWPFGNYLCKIASASVSFNLYASVFLLTCLSIDRYLAIVHPMKSRLRRTMLVAKVTCIIIWLLAGLASLPTIIHRNVFFIENTNITVCAFHYESQNSTLPVGLGLTKNILGFLFPFLIILTSYTLIWKALKKAYEIQKNKPRNDDIFKIIMAIVLFFFFSWVPHQIFTFLDVLIQLGIIHDCKIADIVDTAMPITICLAYFNNCLNPLFYGFLGKKFKKYFLQLLKYIPPKAKSHSSLSTKMSTLSYRPSENGSSSTKKSAPCTEVE.

At 1-25 the chain is on the extracellular side; the sequence is MILNSSTEDSIKRIQDDCPKAGRHN. Asn4 carries an N-linked (GlcNAc...) asparagine glycan. 2 residues coordinate angiotensin II: Gln15 and Asp17. Intrachain disulfides connect Cys18–Cys274 and Cys101–Cys180. A helical transmembrane segment spans residues 26–55; it reads YIFVMIPTLYSIIFVVGIFGNSLVVIVIYF. Topologically, residues 56-61 are cytoplasmic; sequence YMKLKT. A helical transmembrane segment spans residues 62 to 89; sequence VASVFLLNLALADLCFLLTLPLWAVYTA. Over 90 to 98 the chain is Extracellular; that stretch reads MEYRWPFGN. Residues 99 to 125 traverse the membrane as a helical segment; sequence YLCKIASASVSFNLYASVFLLTCLSID. The Cytoplasmic portion of the chain corresponds to 126 to 141; it reads RYLAIVHPMKSRLRRT. Residues 142-165 form a helical membrane-spanning segment; that stretch reads MLVAKVTCIIIWLLAGLASLPTII. Over 166–190 the chain is Extracellular; sequence HRNVFFIENTNITVCAFHYESQNST. Residue Arg167 coordinates angiotensin II. Asn176 carries an N-linked (GlcNAc...) asparagine glycan. Residues Phe182, His183, and Tyr184 each coordinate angiotensin II. An N-linked (GlcNAc...) asparagine glycan is attached at Asn188. The chain crosses the membrane as a helical span at residues 191 to 216; sequence LPVGLGLTKNILGFLFPFLIILTSYT. Residue Lys199 participates in angiotensin II binding. Residues 217-239 lie on the Cytoplasmic side of the membrane; it reads LIWKALKKAYEIQKNKPRNDDIF. Residues 240 to 268 form a helical membrane-spanning segment; sequence KIIMAIVLFFFFSWVPHQIFTFLDVLIQL. At 269 to 278 the chain is on the extracellular side; the sequence is GIIHDCKIAD. A helical membrane pass occupies residues 279 to 304; that stretch reads IVDTAMPITICLAYFNNCLNPLFYGF. Topologically, residues 305–359 are cytoplasmic; sequence LGKKFKKYFLQLLKYIPPKAKSHSSLSTKMSTLSYRPSENGSSSTKKSAPCTEVE. The segment at 326–359 is disordered; that stretch reads SHSSLSTKMSTLSYRPSENGSSSTKKSAPCTEVE. Positions 327 to 351 are enriched in polar residues; sequence HSSLSTKMSTLSYRPSENGSSSTKK. Cys355 carries the S-palmitoyl cysteine lipid modification.

It belongs to the G-protein coupled receptor 1 family. As to quaternary structure, interacts with MAS1. Interacts with ARRB1. Interacts with FLNA (via filamin repeat 21); increases PKA-mediated phosphorylation of FLNA. C-terminal Ser or Thr residues may be phosphorylated.

The protein localises to the cell membrane. Its function is as follows. Receptor for angiotensin II, a vasoconstricting peptide, which acts as a key regulator of blood pressure and sodium retention by the kidney. The activated receptor in turn couples to G-alpha proteins G(q) (GNAQ, GNA11, GNA14 or GNA15) and thus activates phospholipase C and increases the cytosolic Ca(2+) concentrations, which in turn triggers cellular responses such as stimulation of protein kinase C. The chain is Type-1 angiotensin II receptor (AGTR1) from Sus scrofa (Pig).